The sequence spans 238 residues: Large ribosomal subunit protein uL1 (238 aa).

A disordered region spans residues 217-238 (TNGPGVPVDETIQKNYADDAEA).

This sequence belongs to the universal ribosomal protein uL1 family. Part of the 50S ribosomal subunit.

Functionally, binds directly to 23S rRNA. The L1 stalk is quite mobile in the ribosome, and is involved in E site tRNA release. Protein L1 is also a translational repressor protein, it controls the translation of the L11 operon by binding to its mRNA. In Corynebacterium urealyticum (strain ATCC 43042 / DSM 7109), this protein is Large ribosomal subunit protein uL1.